The sequence spans 627 residues: MPSTAEKQRRILPFFQFTSLSTKDKFGILVQRDPRLAGLGVLGRGVLFSCFHEEHLKEATQLYEVLIECESFEEFLDLCHQAREYVNEGLYVYAVSVAILHRQDCRGVSLPPVQEVFPDKFVPSETLFKAFKEVRLHPDDEEIIVDIEKTGNVKDPEYNLAYYREDIGVNAHHWHWHLVYPATWRPEVVHRIKDRKGELFFYMHQQMCARYDSERLSNGMAPMVPFHNFHEPMEGYSSHLSSGINGMPYAFRPHGRILKDMREVSVQDLERSRERLLDAINLGYVVDPNGLETPLDELHGIDILGAIVESSNDSVNKSYYGSLHNWGHVIMSAVDDPDGRYQLNPGVMSDTATSLRDPIFYRWHRFIDDMFQEYKKSLTPYSSQLQFKGVIVKSVCVRAKTADVVETTFANALLDISHAFNFGRTGPVKVRYNHLTHEPFTYKIVVDNAGTKTRKATVRIFLGPEHDNLGNEFDIGRLRRLMIELDKFTTVLEPGENVIERDSIDSSVTIREQYTYRQLQDGRSNREQTEYCSCGWPNDLLVPKGNEHGMKFRLFVMLTDAVQGQVGDHGATGLCTDAVSYCGAKDQLYPDRYPMGFPFDRDIKADSIPEWLHPNMHFSEVTITHHQ.

Positions 173, 177, and 204 each coordinate Cu cation. 2 N-linked (GlcNAc...) asparagine glycosylation sites follow: Asn-312 and Asn-316. The Cu cation site is built by His-324, His-328, and His-364. Cysteines 534 and 582 form a disulfide.

Belongs to the tyrosinase family. Hemocyanin subfamily. Tarantula hemocyanin is a 24-chain polymer with seven different chains identified. As to expression, hemolymph.

The protein resides in the secreted. It is found in the extracellular space. Hemocyanins are copper-containing oxygen carriers occurring freely dissolved in the hemolymph of many mollusks and arthropods. This chain is Hemocyanin B chain (HCB), found in Aphonopelma sp. (American tarantula).